The primary structure comprises 1770 residues: Transposon Ty2-DR3 Gag-Pol polyprotein (1770 aa).

6 stretches are compositionally biased toward polar residues: residues 1 to 11, 19 to 39, 49 to 60, 366 to 390, 399 to 408, and 415 to 435; these read MESQQLHQNPH, ASVT…SASN, KVNSQQETTPGT, VSRT…NSSK, IATSSKFSRV, and ESTV…GQQQ. Disordered stretches follow at residues 1-89 and 355-449; these read MESQ…QQHG and SQYK…SNDE. Positions 295 to 397 are RNA-binding; that stretch reads ENNINVSDRL…SSKPRAAKAH (103 aa). Catalysis depends on aspartate 457, which acts as the For protease activity; shared with dimeric partner. The integrase-type zinc finger-like stretch occupies residues 579–636; that stretch reads NVNKSKSVNKYPYPLIHRMLGHANFRSIQKSLKKNAVTYLKESDIEWSNASTYQCPDC. Residues 656–831 form the Integrase catalytic domain; that stretch reads ESYEPFQYLH…AGLDITTILP (176 aa). 2 residues coordinate Mg(2+): aspartate 667 and aspartate 732. 2 disordered regions span residues 1005–1038 and 1057–1205; these read GGTI…MIDL and GGTE…TEIE. Composition is skewed to polar residues over residues 1009 to 1024 and 1065 to 1082; these read ESDT…FTAR and QRNS…STPS. Residues 1193–1227 carry the Bipartite nuclear localization signal motif; sequence KKRSLEDNETEIEVSRDTWNNKNMRSLEPPRSKKR. Positions 1353 to 1491 constitute a Reverse transcriptase Ty1/copia-type domain; that stretch reads NDYYITQLDI…DILGLEIKYQ (139 aa). Mg(2+) is bound by residues aspartate 1361, aspartate 1442, aspartate 1443, aspartate 1625, glutamate 1667, and aspartate 1700. Residues 1625–1767 enclose the RNase H Ty1/copia-type domain; it reads DASYGNQPYY…IKTFKLLTNK (143 aa).

The capsid protein forms a homotrimer, from which the VLPs are assembled. The protease is a homodimer, whose active site consists of two apposed aspartic acid residues. Post-translationally, initially, virus-like particles (VLPs) are composed of the structural unprocessed proteins Gag and Gag-Pol, and also contain the host initiator methionine tRNA (tRNA(i)-Met) which serves as a primer for minus-strand DNA synthesis, and a dimer of genomic Ty RNA. Processing of the polyproteins occurs within the particle and proceeds by an ordered pathway, called maturation. First, the protease (PR) is released by autocatalytic cleavage of the Gag-Pol polyprotein, and this cleavage is a prerequisite for subsequent processing at the remaining sites to release the mature structural and catalytic proteins. Maturation takes place prior to the RT reaction and is required to produce transposition-competent VLPs.

Its subcellular location is the cytoplasm. It localises to the nucleus. The catalysed reaction is DNA(n) + a 2'-deoxyribonucleoside 5'-triphosphate = DNA(n+1) + diphosphate. It carries out the reaction Endonucleolytic cleavage to 5'-phosphomonoester.. In terms of biological role, capsid protein (CA) is the structural component of the virus-like particle (VLP), forming the shell that encapsulates the retrotransposons dimeric RNA genome. The particles are assembled from trimer-clustered units and there are holes in the capsid shells that allow for the diffusion of macromolecules. CA also has nucleocapsid-like chaperone activity, promoting primer tRNA(i)-Met annealing to the multipartite primer-binding site (PBS), dimerization of Ty2 RNA and initiation of reverse transcription. Functionally, the aspartyl protease (PR) mediates the proteolytic cleavages of the Gag and Gag-Pol polyproteins after assembly of the VLP. Reverse transcriptase/ribonuclease H (RT) is a multifunctional enzyme that catalyzes the conversion of the retro-elements RNA genome into dsDNA within the VLP. The enzyme displays a DNA polymerase activity that can copy either DNA or RNA templates, and a ribonuclease H (RNase H) activity that cleaves the RNA strand of RNA-DNA heteroduplexes during plus-strand synthesis and hydrolyzes RNA primers. The conversion leads to a linear dsDNA copy of the retrotransposon that includes long terminal repeats (LTRs) at both ends. Its function is as follows. Integrase (IN) targets the VLP to the nucleus, where a subparticle preintegration complex (PIC) containing at least integrase and the newly synthesized dsDNA copy of the retrotransposon must transit the nuclear membrane. Once in the nucleus, integrase performs the integration of the dsDNA into the host genome. This Saccharomyces cerevisiae (strain ATCC 204508 / S288c) (Baker's yeast) protein is Transposon Ty2-DR3 Gag-Pol polyprotein (TY2B-DR3).